Reading from the N-terminus, the 322-residue chain is Nuclease 1, mitochondrial (322 aa).

H142 (proton acceptor) is an active-site residue. N174 provides a ligand contact to Mg(2+).

It belongs to the DNA/RNA non-specific endonuclease family. As to quaternary structure, homodimer. Requires Mn(2+) as cofactor. The cofactor is Mg(2+).

It is found in the mitochondrion inner membrane. Its function is as follows. This enzyme has both RNase and DNase activity. It degrades single-stranded DNA and RNA. In Schizosaccharomyces pombe (strain 972 / ATCC 24843) (Fission yeast), this protein is Nuclease 1, mitochondrial (pnu1).